The primary structure comprises 62 residues: Large ribosomal subunit protein bL28 (62 aa).

This sequence belongs to the bacterial ribosomal protein bL28 family.

This Staphylococcus epidermidis (strain ATCC 12228 / FDA PCI 1200) protein is Large ribosomal subunit protein bL28.